Consider the following 1025-residue polypeptide: Leucyl-cystinyl aminopeptidase (1025 aa).

N-acetylmethionine is present on Met-1. Over 1-109 (MESFTNDRLQ…DGTCSLPSAR (109 aa)) the chain is Cytoplasmic. A Dileucine internalization motif motif is present at residues 53 to 54 (LL). Position 70 is a phosphotyrosine (Tyr-70). The short motif at 76 to 77 (LL) is the Dileucine internalization motif element. 2 positions are modified to phosphoserine: Ser-80 and Ser-91. The tankyrase binding stretch occupies residues 96–101 (RQSPDG). The chain crosses the membrane as a helical; Signal-anchor for type II membrane protein span at residues 110 to 131 (TLVICVFVIVVAVSVIMVIYLL). Residues 132 to 1025 (PRCTFTKEGC…RNLKTLSQWL (894 aa)) are Extracellular-facing. N-linked (GlcNAc...) asparagine glycosylation is found at Asn-145, Asn-184, Asn-215, Asn-256, and Asn-266. Glu-295 is a binding site for substrate. Residues Asn-368 and Asn-374 are each glycosylated (N-linked (GlcNAc...) asparagine). 428 to 432 (GAMEN) is a binding site for substrate. The N-linked (GlcNAc...) asparagine glycan is linked to Asn-447. His-464 contacts Zn(2+). The active-site Proton acceptor is Glu-465. Zn(2+)-binding residues include His-468 and Glu-487. 9 N-linked (GlcNAc...) asparagine glycosylation sites follow: Asn-525, Asn-578, Asn-664, Asn-682, Asn-695, Asn-758, Asn-834, Asn-850, and Asn-989.

Belongs to the peptidase M1 family. Homodimer. Binds tankyrases 1 and 2. Requires Zn(2+) as cofactor.

The protein localises to the cell membrane. The protein resides in the endomembrane system. The enzyme catalyses Release of an N-terminal amino acid, Cys-|-Xaa-, in which the half-cystine residue is involved in a disulfide loop, notably in oxytocin or vasopressin. Hydrolysis rates on a range of aminoacyl arylamides exceed that for the cystinyl derivative, however.. In terms of biological role, release of an N-terminal amino acid, cleave before cysteine, leucine as well as other amino acids. Degrades peptide hormones such as oxytocin, vasopressin and angiotensin III, and plays a role in maintaining homeostasis during pregnancy. May be involved in the inactivation of neuronal peptides in the brain. Cleaves Met-enkephalin and dynorphin. Binds angiotensin IV and may be the angiotensin IV receptor in the brain. This Mus musculus (Mouse) protein is Leucyl-cystinyl aminopeptidase (Lnpep).